We begin with the raw amino-acid sequence, 290 residues long: Probable endonuclease 4 (290 aa).

H69, H109, E145, D179, H182, H216, D229, H231, and E261 together coordinate Zn(2+).

This sequence belongs to the AP endonuclease 2 family. It depends on Zn(2+) as a cofactor.

It carries out the reaction Endonucleolytic cleavage to 5'-phosphooligonucleotide end-products.. In terms of biological role, endonuclease IV plays a role in DNA repair. It cleaves phosphodiester bonds at apurinic or apyrimidinic (AP) sites, generating a 3'-hydroxyl group and a 5'-terminal sugar phosphate. This chain is Probable endonuclease 4, found in Chlorobium limicola (strain DSM 245 / NBRC 103803 / 6330).